The following is a 269-amino-acid chain: Tryptophan synthase alpha chain (269 aa).

Catalysis depends on proton acceptor residues E49 and D60.

Belongs to the TrpA family. As to quaternary structure, tetramer of two alpha and two beta chains.

The enzyme catalyses (1S,2R)-1-C-(indol-3-yl)glycerol 3-phosphate + L-serine = D-glyceraldehyde 3-phosphate + L-tryptophan + H2O. It participates in amino-acid biosynthesis; L-tryptophan biosynthesis; L-tryptophan from chorismate: step 5/5. In terms of biological role, the alpha subunit is responsible for the aldol cleavage of indoleglycerol phosphate to indole and glyceraldehyde 3-phosphate. This chain is Tryptophan synthase alpha chain, found in Pseudomonas syringae pv. syringae.